Here is a 333-residue protein sequence, read N- to C-terminus: Gap junction alpha-4 protein (333 aa).

Topologically, residues 1–20 (MGDWGFLEKLLDQVQEHSTV) are cytoplasmic. The chain crosses the membrane as a helical span at residues 21–40 (VGKIWLTVLFIFRILILGLA). At 41 to 76 (GESVWGDEQSDFECNTAQPGCTNVCYDQAFPISHIR) the chain is on the extracellular side. A helical membrane pass occupies residues 77-99 (YWVLQFLFVSTPTLVYLGHVIYL). Residues 100 to 148 (SRREERLRQKEGELRALPAKDPQVERALAAVERQMAKISVAEDGRLRIR) are Cytoplasmic-facing. Residues 149-165 (GALMGTYVASVLCKSVL) traverse the membrane as a helical segment. At 166 to 207 (EAGFLYGQWRLYGWTMEPVFVCQRAPCPYLVDCFVSRPTEKT) the chain is on the extracellular side. The chain crosses the membrane as a helical span at residues 208–230 (IFIIFMLVVGLISLVLNLLELVH). Residues 231–333 (LLCRCLSRGM…SSSASKKQYV (103 aa)) lie on the Cytoplasmic side of the membrane. The disordered stretch occupies residues 292–333 (ANLTTEERLASSRPPLFLDPPPQNGQKPPSRPSSSASKKQYV). Over residues 323–333 (PSSSASKKQYV) the composition is skewed to low complexity.

It belongs to the connexin family. Alpha-type (group II) subfamily. In terms of assembly, a connexon is composed of a hexamer of connexins. In terms of tissue distribution, expressed in multiple organs and tissues, including heart, uterus, ovary, and blood vessel endothelium.

The protein resides in the cell membrane. It is found in the cell junction. It localises to the gap junction. Its function is as follows. One gap junction consists of a cluster of closely packed pairs of transmembrane channels, the connexons, through which materials of low MW diffuse from one cell to a neighboring cell. The sequence is that of Gap junction alpha-4 protein (GJA4) from Homo sapiens (Human).